We begin with the raw amino-acid sequence, 408 residues long: Menaquinone reductase (408 aa).

FAD contacts are provided by residues 13 to 17 (GAGPA), 46 to 49 (CGDG), Arg103, Ala127, Asp290, and 302 to 303 (GI).

Belongs to the geranylgeranyl reductase family. FAD serves as cofactor.

The catalysed reaction is menaquinone-9 + AH2 = beta-dihydromenaquinone-9 + A. The protein operates within quinol/quinone metabolism; menaquinone biosynthesis. Its function is as follows. Catalyzes the reduction of a single double bond in the isoprenoid tail of menaquinone (MK-9) in M.tuberculosis, likely the beta-isoprene unit, forming the predominant form of menaquinone found in mycobacteria, MK-9(II-H2). This chain is Menaquinone reductase, found in Mycobacterium tuberculosis (strain CDC 1551 / Oshkosh).